Consider the following 614-residue polypeptide: UvrABC system protein C (614 aa).

Residues 20–98 (TAPGVYRMYA…IKSLSPRYNV (79 aa)) enclose the GIY-YIG domain. Residues 207-242 (DELTRELGEQMQAASEALEFEQAARLRDLISSLRSM) enclose the UVR domain.

It belongs to the UvrC family. Interacts with UvrB in an incision complex.

The protein localises to the cytoplasm. Its function is as follows. The UvrABC repair system catalyzes the recognition and processing of DNA lesions. UvrC both incises the 5' and 3' sides of the lesion. The N-terminal half is responsible for the 3' incision and the C-terminal half is responsible for the 5' incision. The chain is UvrABC system protein C from Stenotrophomonas maltophilia (strain R551-3).